A 193-amino-acid polypeptide reads, in one-letter code: Ion-translocating oxidoreductase complex subunit A (193 aa).

Transmembrane regions (helical) follow at residues 5 to 25, 39 to 59, 72 to 92, 102 to 122, 134 to 154, and 171 to 191; these read ILLI…FLGL, IGMG…AYLV, LRTL…EMVI, LLGI…VALL, VIYG…FAAL, and SIAL…SGLV.

This sequence belongs to the NqrDE/RnfAE family. The complex is composed of six subunits: RnfA, RnfB, RnfC, RnfD, RnfE and RnfG.

It localises to the cell inner membrane. In terms of biological role, part of a membrane-bound complex that couples electron transfer with translocation of ions across the membrane. The sequence is that of Ion-translocating oxidoreductase complex subunit A from Histophilus somni (strain 129Pt) (Haemophilus somnus).